The chain runs to 347 residues: Ribosomal RNA small subunit methyltransferase C (347 aa).

It belongs to the methyltransferase superfamily. RsmC family. In terms of assembly, monomer.

The protein resides in the cytoplasm. The enzyme catalyses guanosine(1207) in 16S rRNA + S-adenosyl-L-methionine = N(2)-methylguanosine(1207) in 16S rRNA + S-adenosyl-L-homocysteine + H(+). Functionally, specifically methylates the guanine in position 1207 of 16S rRNA in the 30S particle. The polypeptide is Ribosomal RNA small subunit methyltransferase C (Shewanella baltica (strain OS195)).